Reading from the N-terminus, the 158-residue chain is Transcription elongation factor GreA (158 aa).

The stretch at 47–74 forms a coiled coil; the sequence is AEYHAAKEEQSHNEGRIAELEDKLARAD.

Belongs to the GreA/GreB family.

Functionally, necessary for efficient RNA polymerase transcription elongation past template-encoded arresting sites. The arresting sites in DNA have the property of trapping a certain fraction of elongating RNA polymerases that pass through, resulting in locked ternary complexes. Cleavage of the nascent transcript by cleavage factors such as GreA or GreB allows the resumption of elongation from the new 3'terminus. GreA releases sequences of 2 to 3 nucleotides. In Nitrobacter winogradskyi (strain ATCC 25391 / DSM 10237 / CIP 104748 / NCIMB 11846 / Nb-255), this protein is Transcription elongation factor GreA.